We begin with the raw amino-acid sequence, 74 residues long: MRLFLSLPVLVVVLSMVLEGPTPAQGVLDVSNPFDVLEEFGKTLEDNVREFINLITQSELPAKTRDWFSEIFGK.

The first 26 residues, 1 to 26 (MRLFLSLPVLVVVLSMVLEGPTPAQG), serve as a signal peptide directing secretion.

The protein belongs to the apolipoprotein C1 family.

It is found in the secreted. This is Apolipoprotein C-I, acidic form (APOC1A) from Colobus guereza (Mantled guereza).